We begin with the raw amino-acid sequence, 389 residues long: Altered inheritance of mitochondria protein 6 (389 aa).

The first 23 residues, 1–23 (MMLLSQPGIWLLVSLFLCSSVNS), serve as a signal peptide directing secretion.

This sequence belongs to the AIM6 family.

The polypeptide is Altered inheritance of mitochondria protein 6 (AIM6) (Eremothecium gossypii (strain ATCC 10895 / CBS 109.51 / FGSC 9923 / NRRL Y-1056) (Yeast)).